The chain runs to 186 residues: Glutathione-independent glyoxalase DJR-1.2 (186 aa).

Residues E20, C105, and H124 contribute to the active site.

The protein belongs to the peptidase C56 family. DJ-1 subfamily. In terms of tissue distribution, expressed in various tissues, including pharyngeal muscles, pharynx-intestinal valve, ventral nerve cord, spermatheca, rectal gland, inner labial (IL) cells of head neurons, phasmid (PHA/PHB) neurons in tail and supporting sheath/socket cells, as well as in head mesodermal cells (HMC), excretory canals and coelomocytes.

It localises to the cytoplasm. The catalysed reaction is methylglyoxal + H2O = (R)-lactate + H(+). In terms of biological role, catalyzes the conversion of methylglyoxal (MG) or glyoxal (GO) to D-lactate or glycolic acid respectively in a single glutathione (GSH)-independent step. May play a role in detoxifying endogenously produced glyoxals. Involved in protection against glyoxal-induced cell death. Protects dopaminergic neurons from glyoxal-dependent neuronal degeneration. This chain is Glutathione-independent glyoxalase DJR-1.2, found in Caenorhabditis elegans.